The primary structure comprises 551 residues: Glutamate--tRNA ligase (551 aa).

The short motif at 100–110 (PNPNGPPTLGS) is the 'HIGH' region element.

This sequence belongs to the class-I aminoacyl-tRNA synthetase family. Glutamate--tRNA ligase type 2 subfamily.

It localises to the cytoplasm. It carries out the reaction tRNA(Glu) + L-glutamate + ATP = L-glutamyl-tRNA(Glu) + AMP + diphosphate. In terms of biological role, catalyzes the attachment of glutamate to tRNA(Glu) in a two-step reaction: glutamate is first activated by ATP to form Glu-AMP and then transferred to the acceptor end of tRNA(Glu). In Archaeoglobus fulgidus (strain ATCC 49558 / DSM 4304 / JCM 9628 / NBRC 100126 / VC-16), this protein is Glutamate--tRNA ligase.